The primary structure comprises 830 residues: Ribosome biogenesis protein ERB1 (830 aa).

Positions 1–141 (MAPQPLKVGT…ENKDLPVDEK (141 aa)) are disordered. 2 stretches are compositionally biased toward acidic residues: residues 35–44 (VSEESDEEFG) and 52–109 (MSDD…DSDS). Residues 131-141 (EENKDLPVDEK) are compositionally biased toward basic and acidic residues. WD repeat units follow at residues 481 to 520 (PGDTRVRSVSTSPDGQWIASGSEDGVVRVWDLGNGREVWR), 523 to 563 (LHAG…APHI), 660 to 698 (KTPGTIQRVAFHPSKPHFFAATQRYIRLYDLAAQKLIRT), 701 to 740 (SGVKWISSMDVHSGGDNLIIGSYDKKLAWFDMDLSAKPYK), 744 to 783 (YHNRALRSVAYHPTLPLFASASDDGTVHIFHCTVYTDLMQ), and 799 to 830 (IDGIGVLDLRWVPGKPWLVSSGADGEVRLWCS).

Belongs to the WD repeat BOP1/ERB1 family. In terms of assembly, component of the NOP7 complex, composed of ERB1, NOP7 and YTM1. The complex is held together by ERB1, which interacts with NOP7 via its N-terminal domain and with YTM1 via a high-affinity interaction between the seven-bladed beta-propeller domains of the 2 proteins. The NOP7 complex associates with the 66S pre-ribosome.

The protein localises to the nucleus. It is found in the nucleolus. The protein resides in the nucleoplasm. Component of the NOP7 complex, which is required for maturation of the 25S and 5.8S ribosomal RNAs and formation of the 60S ribosome. The sequence is that of Ribosome biogenesis protein ERB1 from Cryptococcus neoformans var. neoformans serotype D (strain B-3501A) (Filobasidiella neoformans).